The following is a 494-amino-acid chain: Anthranilate synthase component 1 (494 aa).

Residues Ser50 and 276 to 278 (PYM) each bind L-tryptophan. 311–312 (GT) is a chorismate binding site. Glu338 is a binding site for Mg(2+). Chorismate-binding positions include Tyr426, Arg446, 460–462 (GAG), and Gly462. Residue Glu475 participates in Mg(2+) binding.

Belongs to the anthranilate synthase component I family. In terms of assembly, heterotetramer consisting of two non-identical subunits: a beta subunit (TrpG) and a large alpha subunit (TrpE). Mg(2+) is required as a cofactor.

The enzyme catalyses chorismate + L-glutamine = anthranilate + pyruvate + L-glutamate + H(+). It participates in amino-acid biosynthesis; L-tryptophan biosynthesis; L-tryptophan from chorismate: step 1/5. Feedback inhibited by tryptophan. Part of a heterotetrameric complex that catalyzes the two-step biosynthesis of anthranilate, an intermediate in the biosynthesis of L-tryptophan. In the first step, the glutamine-binding beta subunit (TrpG) of anthranilate synthase (AS) provides the glutamine amidotransferase activity which generates ammonia as a substrate that, along with chorismate, is used in the second step, catalyzed by the large alpha subunit of AS (TrpE) to produce anthranilate. In the absence of TrpG, TrpE can synthesize anthranilate directly from chorismate and high concentrations of ammonia. The protein is Anthranilate synthase component 1 (trpE) of Acetivibrio thermocellus (Hungateiclostridium thermocellum).